Consider the following 190-residue polypeptide: Holliday junction branch migration complex subunit RuvA (190 aa).

The segment at 1 to 65 is domain I; that stretch reads MIGTLSGTVE…DGVSQLYGFA (65 aa). The tract at residues 66-137 is domain II; that stretch reads NREEQNCMRM…LTPQVQKFEL (72 aa). The segment at 137-141 is flexible linker; the sequence is LNRFA. The domain III stretch occupies residues 142–190; it reads ATTRTDSEAVAALLSLGYERTAALGALQKVGVCDSTEDAVRRALLELSK.

It belongs to the RuvA family. As to quaternary structure, homotetramer. Forms an RuvA(8)-RuvB(12)-Holliday junction (HJ) complex. HJ DNA is sandwiched between 2 RuvA tetramers; dsDNA enters through RuvA and exits via RuvB. An RuvB hexamer assembles on each DNA strand where it exits the tetramer. Each RuvB hexamer is contacted by two RuvA subunits (via domain III) on 2 adjacent RuvB subunits; this complex drives branch migration. In the full resolvosome a probable DNA-RuvA(4)-RuvB(12)-RuvC(2) complex forms which resolves the HJ.

The protein resides in the cytoplasm. The RuvA-RuvB-RuvC complex processes Holliday junction (HJ) DNA during genetic recombination and DNA repair, while the RuvA-RuvB complex plays an important role in the rescue of blocked DNA replication forks via replication fork reversal (RFR). RuvA specifically binds to HJ cruciform DNA, conferring on it an open structure. The RuvB hexamer acts as an ATP-dependent pump, pulling dsDNA into and through the RuvAB complex. HJ branch migration allows RuvC to scan DNA until it finds its consensus sequence, where it cleaves and resolves the cruciform DNA. This Anaplasma marginale (strain Florida) protein is Holliday junction branch migration complex subunit RuvA.